A 426-amino-acid chain; its full sequence is Glutamate-1-semialdehyde 2,1-aminomutase (426 aa).

Lysine 265 bears the N6-(pyridoxal phosphate)lysine mark.

This sequence belongs to the class-III pyridoxal-phosphate-dependent aminotransferase family. HemL subfamily. In terms of assembly, homodimer. Pyridoxal 5'-phosphate is required as a cofactor.

The protein localises to the cytoplasm. The catalysed reaction is (S)-4-amino-5-oxopentanoate = 5-aminolevulinate. Its pathway is porphyrin-containing compound metabolism; protoporphyrin-IX biosynthesis; 5-aminolevulinate from L-glutamyl-tRNA(Glu): step 2/2. This is Glutamate-1-semialdehyde 2,1-aminomutase from Neisseria gonorrhoeae (strain NCCP11945).